Reading from the N-terminus, the 232-residue chain is dTTP/UTP pyrophosphatase (232 aa).

Residue D103 is the Proton acceptor of the active site.

It belongs to the Maf family. YhdE subfamily. A divalent metal cation serves as cofactor.

The protein localises to the cytoplasm. It catalyses the reaction dTTP + H2O = dTMP + diphosphate + H(+). The catalysed reaction is UTP + H2O = UMP + diphosphate + H(+). Its function is as follows. Nucleoside triphosphate pyrophosphatase that hydrolyzes dTTP and UTP. May have a dual role in cell division arrest and in preventing the incorporation of modified nucleotides into cellular nucleic acids. The polypeptide is dTTP/UTP pyrophosphatase (Bartonella henselae (strain ATCC 49882 / DSM 28221 / CCUG 30454 / Houston 1) (Rochalimaea henselae)).